Consider the following 288-residue polypeptide: Probable chromosome 1-partitioning protein ParB (288 aa).

The protein belongs to the ParB family.

Involved in chromosome partition. Localize to both poles of the predivisional cell following completion of DNA replication. Binds to the DNA origin of replication. The chain is Probable chromosome 1-partitioning protein ParB (parB1) from Deinococcus radiodurans (strain ATCC 13939 / DSM 20539 / JCM 16871 / CCUG 27074 / LMG 4051 / NBRC 15346 / NCIMB 9279 / VKM B-1422 / R1).